Reading from the N-terminus, the 42-residue chain is Daisho1 (42 aa).

Residues 1-20 (MKFFQAAALLLAMFAALANA) form the signal peptide. Positions 21–26 (EPVPQP) are cleaved as a propeptide — removed by a dipeptidylpeptidase. Threonine 41 bears the Threonine amide mark.

Hemolymph (at protein level).

The protein localises to the secreted. Its function is as follows. Peptide which plays a role in the humoral immune response to a subset of filamentous fungi, including F.oxysporum and F.verticillioides. The chain is Daisho1 from Drosophila melanogaster (Fruit fly).